We begin with the raw amino-acid sequence, 152 residues long: Protein IpgF (152 aa).

The N-terminal stretch at 1–17 (MSRFVFILLCFIPHLGR) is a signal peptide.

Belongs to the IagB/IpgF/P19 family.

This chain is Protein IpgF (ipgF), found in Shigella flexneri.